The following is a 226-amino-acid chain: MGKNILFFGPNGSGKGTQGAIVQKKYDIPHIESGAIFREHIGGGTELGLKAKEYIERGDLVPDEITIPMMVSRLQKDDCKKGWILDGFPRSKVQAITLAETLAKEGMALDYVIEIVLDRDIAKERIMGRRLCVNDNNHPNHIAFEAIKPVEKDGKLVCRVCGGDLKTRPDDQDVNAINKRHGIYYDEETGTMAAVNYFKNANGPKVISIDGSASIGEVTELIMKEL.

12-17 (GSGKGT) contributes to the ATP binding site. The interval 32 to 61 (ESGAIFREHIGGGTELGLKAKEYIERGDLV) is NMP. Residues serine 33, arginine 38, 59–61 (DLV), 87–90 (GFPR), and glutamine 94 each bind AMP. Positions 128–171 (GRRLCVNDNNHPNHIAFEAIKPVEKDGKLVCRVCGGDLKTRPDD) are LID. Arginine 129 lines the ATP pocket. 2 residues coordinate AMP: arginine 168 and arginine 180. Residue alanine 213 participates in ATP binding.

This sequence belongs to the adenylate kinase family. In terms of assembly, monomer.

It localises to the cytoplasm. It catalyses the reaction AMP + ATP = 2 ADP. Its pathway is purine metabolism; AMP biosynthesis via salvage pathway; AMP from ADP: step 1/1. Catalyzes the reversible transfer of the terminal phosphate group between ATP and AMP. Plays an important role in cellular energy homeostasis and in adenine nucleotide metabolism. The polypeptide is Adenylate kinase (Desulfotalea psychrophila (strain LSv54 / DSM 12343)).